The sequence spans 389 residues: Dihydroorotase (389 aa).

Positions 51 and 53 each coordinate Zn(2+). Residues 53-55 (HVR) and N85 each bind substrate. Zn(2+) contacts are provided by K133, H158, H193, and D256. K133 carries the N6-carboxylysine modification. D256 is an active-site residue. Substrate contacts are provided by residues H260 and 274–275 (PG).

The protein belongs to the metallo-dependent hydrolases superfamily. DHOase family. Class I DHOase subfamily. The cofactor is Zn(2+).

The catalysed reaction is (S)-dihydroorotate + H2O = N-carbamoyl-L-aspartate + H(+). Its pathway is pyrimidine metabolism; UMP biosynthesis via de novo pathway; (S)-dihydroorotate from bicarbonate: step 3/3. Its function is as follows. Catalyzes the reversible cyclization of carbamoyl aspartate to dihydroorotate. This Sulfolobus acidocaldarius (strain ATCC 33909 / DSM 639 / JCM 8929 / NBRC 15157 / NCIMB 11770) protein is Dihydroorotase.